We begin with the raw amino-acid sequence, 212 residues long: Large ribosomal subunit protein uL4 (212 aa).

It belongs to the universal ribosomal protein uL4 family. In terms of assembly, part of the 50S ribosomal subunit.

In terms of biological role, one of the primary rRNA binding proteins, this protein initially binds near the 5'-end of the 23S rRNA. It is important during the early stages of 50S assembly. It makes multiple contacts with different domains of the 23S rRNA in the assembled 50S subunit and ribosome. Forms part of the polypeptide exit tunnel. The protein is Large ribosomal subunit protein uL4 of Caulobacter vibrioides (strain ATCC 19089 / CIP 103742 / CB 15) (Caulobacter crescentus).